A 126-amino-acid polypeptide reads, in one-letter code: Holo-[acyl-carrier-protein] synthase (126 aa).

Residues aspartate 9 and glutamate 58 each coordinate Mg(2+).

Belongs to the P-Pant transferase superfamily. AcpS family. It depends on Mg(2+) as a cofactor.

The protein resides in the cytoplasm. It catalyses the reaction apo-[ACP] + CoA = holo-[ACP] + adenosine 3',5'-bisphosphate + H(+). Transfers the 4'-phosphopantetheine moiety from coenzyme A to a Ser of acyl-carrier-protein. This is Holo-[acyl-carrier-protein] synthase from Yersinia pestis bv. Antiqua (strain Angola).